Consider the following 934-residue polypeptide: Bifunctional uridylyltransferase/uridylyl-removing enzyme (934 aa).

A uridylyltransferase region spans residues 1–379; that stretch reads MSAHDLKLEE…TFSRRKRKLS (379 aa). Positions 380 to 736 are uridylyl-removing; the sequence is DDGAFISENH…AKPHAFEAVT (357 aa). One can recognise an HD domain in the interval 496–613; the sequence is VDEHLLRCIA…IDFADTVQTM (118 aa). ACT domains lie at 737–818 and 848–931; these read EITV…DMLA and VIEV…RSPQ.

It belongs to the GlnD family. Requires Mg(2+) as cofactor.

The catalysed reaction is [protein-PII]-L-tyrosine + UTP = [protein-PII]-uridylyl-L-tyrosine + diphosphate. It catalyses the reaction [protein-PII]-uridylyl-L-tyrosine + H2O = [protein-PII]-L-tyrosine + UMP + H(+). Its activity is regulated as follows. Uridylyltransferase (UTase) activity is inhibited by glutamine, while glutamine activates uridylyl-removing (UR) activity. Its function is as follows. Modifies, by uridylylation and deuridylylation, the PII regulatory proteins (GlnB and homologs), in response to the nitrogen status of the cell that GlnD senses through the glutamine level. Under low glutamine levels, catalyzes the conversion of the PII proteins and UTP to PII-UMP and PPi, while under higher glutamine levels, GlnD hydrolyzes PII-UMP to PII and UMP (deuridylylation). Thus, controls uridylylation state and activity of the PII proteins, and plays an important role in the regulation of nitrogen assimilation and metabolism. This is Bifunctional uridylyltransferase/uridylyl-removing enzyme from Brucella melitensis biotype 2 (strain ATCC 23457).